Consider the following 493-residue polypeptide: Probable cytosol aminopeptidase (493 aa).

Mn(2+) contacts are provided by Lys-257 and Asp-262. Residue Lys-269 is part of the active site. Asp-280, Asp-339, and Glu-341 together coordinate Mn(2+). Arg-343 is an active-site residue.

Belongs to the peptidase M17 family. It depends on Mn(2+) as a cofactor.

The protein resides in the cytoplasm. It carries out the reaction Release of an N-terminal amino acid, Xaa-|-Yaa-, in which Xaa is preferably Leu, but may be other amino acids including Pro although not Arg or Lys, and Yaa may be Pro. Amino acid amides and methyl esters are also readily hydrolyzed, but rates on arylamides are exceedingly low.. The catalysed reaction is Release of an N-terminal amino acid, preferentially leucine, but not glutamic or aspartic acids.. In terms of biological role, presumably involved in the processing and regular turnover of intracellular proteins. Catalyzes the removal of unsubstituted N-terminal amino acids from various peptides. This is Probable cytosol aminopeptidase (pepA) from Aquifex aeolicus (strain VF5).